The primary structure comprises 241 residues: Small ribosomal subunit protein uS2 (241 aa).

Belongs to the universal ribosomal protein uS2 family.

The chain is Small ribosomal subunit protein uS2 from Sodalis glossinidius (strain morsitans).